The primary structure comprises 487 residues: Cysteine--tRNA ligase (487 aa).

Cysteine 29 lines the Zn(2+) pocket. A 'HIGH' region motif is present at residues valine 31–histidine 41. The Zn(2+) site is built by cysteine 209, histidine 234, and glutamate 238. Residues lysine 266–serine 270 carry the 'KMSKS' region motif. Residue lysine 269 participates in ATP binding.

This sequence belongs to the class-I aminoacyl-tRNA synthetase family. In terms of assembly, monomer. Zn(2+) serves as cofactor.

Its subcellular location is the cytoplasm. The enzyme catalyses tRNA(Cys) + L-cysteine + ATP = L-cysteinyl-tRNA(Cys) + AMP + diphosphate. The protein is Cysteine--tRNA ligase of Trichlorobacter lovleyi (strain ATCC BAA-1151 / DSM 17278 / SZ) (Geobacter lovleyi).